Consider the following 137-residue polypeptide: Phosphoribosyl-AMP cyclohydrolase (137 aa).

Residue aspartate 84 coordinates Mg(2+). Residue cysteine 85 participates in Zn(2+) binding. 2 residues coordinate Mg(2+): aspartate 86 and aspartate 88. Positions 101 and 108 each coordinate Zn(2+).

It belongs to the PRA-CH family. As to quaternary structure, homodimer. Mg(2+) is required as a cofactor. Zn(2+) serves as cofactor.

It localises to the cytoplasm. It carries out the reaction 1-(5-phospho-beta-D-ribosyl)-5'-AMP + H2O = 1-(5-phospho-beta-D-ribosyl)-5-[(5-phospho-beta-D-ribosylamino)methylideneamino]imidazole-4-carboxamide. Its pathway is amino-acid biosynthesis; L-histidine biosynthesis; L-histidine from 5-phospho-alpha-D-ribose 1-diphosphate: step 3/9. Functionally, catalyzes the hydrolysis of the adenine ring of phosphoribosyl-AMP. The sequence is that of Phosphoribosyl-AMP cyclohydrolase from Chlorobaculum tepidum (strain ATCC 49652 / DSM 12025 / NBRC 103806 / TLS) (Chlorobium tepidum).